A 23-amino-acid chain; its full sequence is Aurein-4.1 (23 aa).

The protein belongs to the frog skin active peptide (FSAP) family. Aurein subfamily. In terms of tissue distribution, expressed by the skin dorsal glands.

The protein localises to the secreted. Its function is as follows. Has no antimicrobial or anticancer activity. This Ranoidea aurea (Green and golden bell frog) protein is Aurein-4.1.